The chain runs to 596 residues: Tripeptidyl-peptidase SED2 (596 aa).

The N-terminal stretch at 1–16 (MLVLKFVCLLASVAAA) is a signal peptide. The propeptide at 18–203 (PTSWSSHKVV…LEAMSEEEFS (186 aa)) is removed in mature form. One can recognise a Peptidase S53 domain in the interval 210-596 (LVTTACLREL…NFQALTKVLP (387 aa)). Asn-265 carries an N-linked (GlcNAc...) asparagine glycan. Active-site charge relay system residues include Glu-286 and Asp-290. A glycan (N-linked (GlcNAc...) asparagine) is linked at Asn-403. The active-site Charge relay system is the Ser-501. Residues Asp-543 and Ile-544 each contribute to the Ca(2+) site. Asn-572 carries N-linked (GlcNAc...) asparagine glycosylation. Ca(2+) is bound by residues Gly-576 and Asp-578.

The cofactor is Ca(2+).

Its subcellular location is the secreted. It is found in the extracellular space. The enzyme catalyses Release of an N-terminal tripeptide from a polypeptide.. In terms of biological role, secreted tripeptidyl-peptidase which degrades proteins at acidic pHs and is involved in virulence. This Arthroderma otae (strain ATCC MYA-4605 / CBS 113480) (Microsporum canis) protein is Tripeptidyl-peptidase SED2 (SED2).